The following is an 85-amino-acid chain: U4-theraphotoxin-Hhn1a (85 aa).

An N-terminal signal peptide occupies residues 1–22 (MKVTLIAILTCAAVLVLHTTAA). Residues 23-48 (EELEAESQLMKVGMPDTELAAVDEER) constitute a propeptide that is removed on maturation. Intrachain disulfides connect cysteine 52–cysteine 66, cysteine 56–cysteine 77, and cysteine 71–cysteine 82.

It belongs to the neurotoxin 12 (Hwtx-2) family. 02 (Hwtx-2) subfamily. Monomer. Expressed by the venom gland.

It is found in the secreted. Its function is as follows. Neurotoxin active on both insects and mammals. This Cyriopagopus hainanus (Chinese bird spider) protein is U4-theraphotoxin-Hhn1a.